We begin with the raw amino-acid sequence, 160 residues long: Phosphopantetheine adenylyltransferase (160 aa).

Ser-10 lines the substrate pocket. Residues 10 to 11 (SF) and His-18 contribute to the ATP site. 3 residues coordinate substrate: Lys-42, Thr-74, and Arg-88. ATP-binding positions include 89-91 (GLR), Glu-99, and 124-130 (YSFVSST).

Belongs to the bacterial CoaD family. As to quaternary structure, homohexamer. The cofactor is Mg(2+).

The protein localises to the cytoplasm. It carries out the reaction (R)-4'-phosphopantetheine + ATP + H(+) = 3'-dephospho-CoA + diphosphate. It functions in the pathway cofactor biosynthesis; coenzyme A biosynthesis; CoA from (R)-pantothenate: step 4/5. In terms of biological role, reversibly transfers an adenylyl group from ATP to 4'-phosphopantetheine, yielding dephospho-CoA (dPCoA) and pyrophosphate. The chain is Phosphopantetheine adenylyltransferase from Leptospira biflexa serovar Patoc (strain Patoc 1 / Ames).